Reading from the N-terminus, the 213-residue chain is Superoxide dismutase [Mn] (213 aa).

Mn(2+)-binding residues include H27, H82, D168, and H172.

Belongs to the iron/manganese superoxide dismutase family. In terms of assembly, homodimer.

The enzyme catalyses 2 superoxide + 2 H(+) = H2O2 + O2. Its activity is regulated as follows. Inhibited by hydrogen peroxide. Functionally, destroys superoxide anion radicals which are normally produced within the cells and which are toxic to biological systems. In Haemophilus ducreyi (strain 35000HP / ATCC 700724), this protein is Superoxide dismutase [Mn] (sodA).